A 382-amino-acid polypeptide reads, in one-letter code: Mannitol-1-phosphate 5-dehydrogenase (382 aa).

3 to 14 (ALHFGAGNIGRG) provides a ligand contact to NAD(+). Position 269 is an N6-acetyllysine (Lys269).

The protein belongs to the mannitol dehydrogenase family.

The enzyme catalyses D-mannitol 1-phosphate + NAD(+) = beta-D-fructose 6-phosphate + NADH + H(+). The polypeptide is Mannitol-1-phosphate 5-dehydrogenase (Shigella sonnei (strain Ss046)).